Consider the following 221-residue polypeptide: Factor arrest protein 7 (221 aa).

Component of a complex at least composed of FAR3, FAR7, FAR8, FAR10, FAR11 and VPS64.

Participates in the control of the reentry into the cell cycle following pheromone treatment. In Saccharomyces cerevisiae (strain ATCC 204508 / S288c) (Baker's yeast), this protein is Factor arrest protein 7 (FAR7).